A 73-amino-acid chain; its full sequence is Plasticin-A1 (73 aa).

An N-terminal signal peptide occupies residues 1–22 (MAFLKKSLFLVLFLAIVPLSIC). Residues 23–42 (EEEKREEENEEKQEDDDQSE) constitute a propeptide that is removed on maturation. The segment at 25–45 (EKREEENEEKQEDDDQSEKRG) is disordered. Acidic residues predominate over residues 30–40 (ENEEKQEDDDQ). Residue Gly70 is modified to Glycine amide. Positions 72-73 (ES) are excised as a propeptide.

This sequence belongs to the frog skin active peptide (FSAP) family. Plasticin subfamily. In terms of tissue distribution, expressed by the skin glands.

The protein resides in the secreted. It is found in the target cell membrane. Peptide with no antimicrobial activity. May act in synergy with cationic peptides by enhancing their activity. Has a moderate hemolytic activity. This is Plasticin-A1 from Agalychnis annae (Blue-sided leaf frog).